Reading from the N-terminus, the 473-residue chain is LETM1 domain-containing protein mdm28, mitochondrial (473 aa).

The N-terminal 73 residues, 1 to 73 (MLRNRLFKTP…FYNIGSSRLY (73 aa)), are a transit peptide targeting the mitochondrion. Over 74–161 (STETPTPSKV…LTRTLKDIGR (88 aa)) the chain is Mitochondrial intermembrane. A helical transmembrane segment spans residues 162 to 182 (LVPFSVFVVVPFAELLLPIAV). The Mitochondrial matrix segment spans residues 183 to 473 (KLFPNLLPST…ESNIPKNERK (291 aa)). The region spanning 205–398 (QLRKTRNEVS…LQDTLASIPD (194 aa)) is the Letm1 RBD domain. The segment at 430–473 (EEEAEHVAEHPDLAKKQTEENKATSKPAVSAKSPESNIPKNERK) is disordered. Basic and acidic residues predominate over residues 434 to 452 (EHVAEHPDLAKKQTEENKA). A compositionally biased stretch (polar residues) spans 462–473 (SPESNIPKNERK).

It is found in the mitochondrion inner membrane. Functionally, involved in mitochondrial potassium homeostasis through the mitochondrial K(+)/H(+) exchange regulation. In Schizosaccharomyces pombe (strain 972 / ATCC 24843) (Fission yeast), this protein is LETM1 domain-containing protein mdm28, mitochondrial (mdm28).